The chain runs to 211 residues: Small ribosomal subunit protein uS3 (211 aa).

The region spanning 38–106 (LRKFIKKAFY…NIELNIIEVK (69 aa)) is the KH type-2 domain.

It belongs to the universal ribosomal protein uS3 family. As to quaternary structure, part of the 30S ribosomal subunit. Forms a tight complex with proteins S10 and S14.

In terms of biological role, binds the lower part of the 30S subunit head. Binds mRNA in the 70S ribosome, positioning it for translation. This is Small ribosomal subunit protein uS3 from Ehrlichia canis (strain Jake).